The primary structure comprises 444 residues: NADH-quinone oxidoreductase subunit F (444 aa).

61-70 (GRGGAGFSTG) is an NAD(+) binding site. Residue 176-223 (GAGRYICGEETALINSLEGRRANPRSKPPFPAVFGLWGKPTCVNNVET) participates in FMN binding. The [4Fe-4S] cluster site is built by cysteine 353, cysteine 356, cysteine 359, and cysteine 400.

Belongs to the complex I 51 kDa subunit family. In terms of assembly, composed of 13 different subunits. Subunits NuoCD, E, F, and G constitute the peripheral sector of the complex. FMN is required as a cofactor. The cofactor is [4Fe-4S] cluster.

It catalyses the reaction a quinone + NADH + 5 H(+)(in) = a quinol + NAD(+) + 4 H(+)(out). Its function is as follows. NDH-1 shuttles electrons from NADH, via FMN and iron-sulfur (Fe-S) centers, to quinones in the respiratory chain. Couples the redox reaction to proton translocation (for every two electrons transferred, four hydrogen ions are translocated across the cytoplasmic membrane), and thus conserves the redox energy in a proton gradient. The sequence is that of NADH-quinone oxidoreductase subunit F (nuoF) from Buchnera aphidicola subsp. Acyrthosiphon pisum (strain APS) (Acyrthosiphon pisum symbiotic bacterium).